The following is a 240-amino-acid chain: Probable metal transport system ATP-binding protein TM_0124 (240 aa).

The region spanning 4–223 (VEVKNLTYRI…LKKIFTDFDI (220 aa)) is the ABC transporter domain. 36 to 43 (GPNGAGKT) lines the ATP pocket.

It belongs to the ABC transporter superfamily.

Its function is as follows. Part of an ATP-driven transport system TM_0123/TM_0124/TM_0125 for a metal. Probably responsible for energy coupling to the transport system. This is Probable metal transport system ATP-binding protein TM_0124 from Thermotoga maritima (strain ATCC 43589 / DSM 3109 / JCM 10099 / NBRC 100826 / MSB8).